A 595-amino-acid polypeptide reads, in one-letter code: Estrogen receptor (595 aa).

A modulating(transactivation AF-1); mediates interaction with MACROD1 region spans residues 1–184; it reads MTMTLHTKAS…AMESVKETRY (184 aa). O-linked (GlcNAc) serine glycosylation occurs at S10. The required for interaction with NCOA1 stretch occupies residues 35 to 47; sequence LERALSEVYVDSS. Positions 35–174 are interaction with DDX5; self-association; that stretch reads LERALSEVYV…LSSSSEKGSM (140 aa). Phosphoserine; by CDK2 is present on residues S103 and S105. Position 118 is a phosphoserine (S118). Positions 143 to 174 are disordered; the sequence is DSGPPAFYRSNSDNRRQSGRERLSSSSEKGSM. The span at 154-165 shows a compositional bias: basic and acidic residues; sequence SDNRRQSGRERL. A Phosphoserine; by CK2 modification is found at S167. 2 NR C4-type zinc fingers span residues 185–205 and 221–245; these read CAVC…CEGC and CPAT…LRKC. A DNA-binding region (nuclear receptor) is located at residues 185 to 250; it reads CAVCNDYASG…RLRKCYEVGM (66 aa). Residues 185 to 310 form a mediates interaction with DNTTIP2 region; it reads CAVCNDYASG…TKKNSPALSL (126 aa). Residues 251-310 form a hinge region; it reads MKGGIRKDRRGGRMLKHKRQRDDLEGRNDMGPSGDMRATNLWPSPLVIKHTKKNSPALSL. R260 is subject to Asymmetric dimethylarginine; by PRMT1. Residues 260–269 are compositionally biased toward basic residues; sequence RGGRMLKHKR. The interval 260 to 285 is disordered; sequence RGGRMLKHKRQRDDLEGRNDMGPSGD. The tract at residues 262-595 is interaction with AKAP13; the sequence is GRMLKHKRQR…SEAESFPNTI (334 aa). The interval 264–595 is self-association; sequence MLKHKRQRDD…SEAESFPNTI (332 aa). Residues 311-547 form the NR LBD domain; that stretch reads TADQMVSALL…DLLLEMLDAH (237 aa). The tract at residues 311-595 is transactivation AF-2; sequence TADQMVSALL…SEAESFPNTI (285 aa). Residues E353 and R394 each contribute to the 17beta-estradiol site. C447 carries S-palmitoyl cysteine lipidation. H524 serves as a coordination point for 17beta-estradiol. Y537 is subject to Phosphotyrosine; by Tyr-kinases. The interval 554–578 is disordered; it reads SRMGVSPEEPSQSQLTTTNSTSSHS. Low complexity predominate over residues 564 to 578; the sequence is SQSQLTTTNSTSSHS. An O-linked (GlcNAc) threonine glycan is attached at T571.

This sequence belongs to the nuclear hormone receptor family. NR3 subfamily. In terms of assembly, binds DNA as a homodimer. Can form a heterodimer with ESR2. Interacts with coactivator NCOA5. Interacts with PELP1, the interaction is enhanced by 17-beta-estradiol; the interaction increases ESR1 transcriptional activity. Interacts with NCOA7; the interaction is ligand-inducible. Interacts with AKAP13, CUEDC2, HEXIM1, KDM5A, MAP1S, SMARD1, and UBE1C. Interacts with MUC1; the interaction is stimulated by 7 beta-estradiol (E2) and enhances ESR1-mediated transcription. Interacts with DNTTIP2, and UIMC1. Interacts with KMT2D/MLL2. Interacts with ATAD2; the interaction is enhanced by estradiol. Interacts with KIF18A and LDB1. Interacts with RLIM (via its C-terminus). Interacts with MACROD1. Interacts with SH2D4A and PLCG. Interacts with SH2D4A; the interaction blocks binding to PLCG and inhibits estrogen-induced cell proliferation. Interacts with DYNLL1. Interacts with CCDC62; the interaction requires estradiol and appears to enhance the transcription of target genes. Interacts with NR2C1; the interaction prevents homodimerization of ESR1 and suppresses its transcriptional activity and cell growth. Interacts with DNAAF4. Interacts with PRMT2. Interacts with RBFOX2. Interacts with EP300; the interaction is estrogen-dependent and enhanced by CITED1. Interacts with CITED1; the interaction is estrogen-dependent. Interacts with FAM120B, FOXL2, PHB2 and SLC30A9. Interacts with coactivators NCOA3 and NCOA6. Interacts with STK3/MST2 only in the presence of SAV1 and vice-versa. Binds to CSNK1D. Interacts with NCOA2; NCOA2 can interact with ESR1 AF-1 and AF-2 domains simultaneously and mediate their transcriptional synergy. Interacts with DDX5. Interacts with NCOA1; the interaction seems to require a self-association of N-terminal and C-terminal regions. Interacts with ZNF366, DDX17, NFKB1, RELA, SP1 and SP3. Interacts with NRIP1. Interacts with GPER1; the interaction occurs in an estrogen-dependent manner. Interacts with CLOCK and the interaction is stimulated by estrogen. Interacts with TRIP4 (ufmylated); estrogen dependent. Interacts with LMTK3; the interaction phosphorylates ESR1 (in vitro) and protects it against proteasomal degradation. Interacts with CCAR2 (via N-terminus) in a ligand-independent manner. Interacts with ZFHX3. Interacts with SFR1 in a ligand-dependent and -independent manner. Interacts with DCAF13, LATS1 and DCAF1; regulates ESR1 ubiquitination and ubiquitin-mediated proteasomal degradation. Interacts (via DNA-binding domain) with POU4F2 (C-terminus); this interaction increases the estrogen receptor ESR1 transcriptional activity in a DNA- and ligand 17-beta-estradiol-independent manner. Interacts with ESRRB isoform 1. Interacts with UBE3A and WBP2. Interacts with GTF2B. Interacts with RBM39. In the absence of hormonal ligand, interacts with TACC1. Interacts with PI3KR1 or PI3KR2 and PTK2/FAK1. Interacts with SRC. Interacts with BAG1; the interaction is promoted in the absence of estradiol (17-beta-estradiol/E2). Interacts with and ubiquitinated by STUB1; the interaction is promoted in the absence of estradiol (17-beta-estradiol/E2). Interacts with NEDD8. In terms of processing, ubiquitinated; regulated by LATS1 via DCAF1 it leads to ESR1 proteasomal degradation. Deubiquitinated by OTUB1. Ubiquitinated by STUB1/CHIP; in the CA1 hippocampal region following loss of endogenous circulating estradiol (17-beta-estradiol/E2). Ubiquitinated by UBR5, leading to its degradation: UBR5 specifically recognizes and binds ligand-bound ESR1 when it is not associated with coactivators (NCOAs). In presence of NCOAs, the UBR5-degron is not accessible, preventing its ubiquitination and degradation. Phosphorylated by cyclin A/CDK2 and CK1. Phosphorylation probably enhances transcriptional activity. Dephosphorylation at Ser-118 by PPP5C inhibits its transactivation activity. Phosphorylated by LMTK3 (in vitro). Post-translationally, palmitoylated at Cys-447 by ZDHHC7 and ZDHHC21. Palmitoylation is required for plasma membrane targeting and for rapid intracellular signaling via ERK and AKT kinases and cAMP generation, but not for signaling mediated by the nuclear hormone receptor. In terms of processing, dimethylated by PRMT1 at Arg-260. The methylation may favor cytoplasmic localization. Demethylated by JMJD6 at Arg-260.

The protein resides in the nucleus. It is found in the cytoplasm. It localises to the golgi apparatus. The protein localises to the cell membrane. In terms of biological role, nuclear hormone receptor. The steroid hormones and their receptors are involved in the regulation of eukaryotic gene expression and affect cellular proliferation and differentiation in target tissues. Ligand-dependent nuclear transactivation involves either direct homodimer binding to a palindromic estrogen response element (ERE) sequence or association with other DNA-binding transcription factors, such as AP-1/c-Jun, c-Fos, ATF-2, Sp1 and Sp3, to mediate ERE-independent signaling. Ligand binding induces a conformational change allowing subsequent or combinatorial association with multiprotein coactivator complexes through LXXLL motifs of their respective components. Mutual transrepression occurs between the estrogen receptor (ER) and NF-kappa-B in a cell-type specific manner. Decreases NF-kappa-B DNA-binding activity and inhibits NF-kappa-B-mediated transcription from the IL6 promoter and displace RELA/p65 and associated coregulators from the promoter. Recruited to the NF-kappa-B response element of the CCL2 and IL8 promoters and can displace CREBBP. Present with NF-kappa-B components RELA/p65 and NFKB1/p50 on ERE sequences. Can also act synergistically with NF-kappa-B to activate transcription involving respective recruitment adjacent response elements; the function involves CREBBP. Can activate the transcriptional activity of TFF1. Also mediates membrane-initiated estrogen signaling involving various kinase cascades. Essential for MTA1-mediated transcriptional regulation of BRCA1 and BCAS3. Maintains neuronal survival in response to ischemic reperfusion injury when in the presence of circulating estradiol (17-beta-estradiol/E2). This is Estrogen receptor (ESR1) from Mesocricetus auratus (Golden hamster).